The primary structure comprises 125 residues: Prepro-urotensin II-gamma (125 aa).

The first 21 residues, 1-21 (MMCNLLLSCSVLLLSCSHLLA), serve as a signal peptide directing secretion. A propeptide spanning residues 109-111 (QFR) is cleaved from the precursor. The cysteines at positions 119 and 124 are disulfide-linked.

This sequence belongs to the urotensin-2 family.

The protein localises to the secreted. Urotensin is found in the teleost caudal neurosecretory system. It has a suggested role in osmoregulation and as a corticotropin-releasing factor. The non-hormonal portion of this precursor may be a urotensin binding protein, urophysin. The chain is Prepro-urotensin II-gamma from Cyprinus carpio (Common carp).